Here is a 412-residue protein sequence, read N- to C-terminus: Cathepsin D (412 aa).

A signal peptide spans 1–20 (MQPSSLLPLALCLLAAPASA). Residues 21–64 (LVRIPLHKFTSIRRTMSEVGGSVEDLIAKGPVSKYSQAVPAVTE) constitute a propeptide, activation peptide. An O-linked (GalNAc...) threonine glycan is attached at Thr-63. A Peptidase A1 domain is found at 79–407 (YYGEIGIGTP…DRDNNRVGFA (329 aa)). 2 disulfide bridges follow: Cys-91-Cys-160 and Cys-110-Cys-117. Asp-97 is an active-site residue. Residues Asn-134 and Asn-263 are each glycosylated (N-linked (GlcNAc...) asparagine). A disulfide bridge connects residues Cys-286 and Cys-290. Asp-295 is an active-site residue. A disulfide bridge connects residues Cys-329 and Cys-366.

The protein belongs to the peptidase A1 family. Consists of a light chain and a heavy chain. Interacts with ADAM30; this leads to activation of CTSD. Interacts with GRN; stabilizes CTSD; increases its proteolytic activity. N- and O-glycosylated. In terms of processing, undergoes proteolytic cleavage and activation by ADAM30. Post-translationally, as well as the major heavy chain which starts at Leu-169, 2 minor forms starting at Gly-170 and Gly-171 have been identified. An additional form starting at Ala-168 has also been identified. In terms of tissue distribution, expressed in the aorta extracellular space (at protein level). Expressed in liver (at protein level).

The protein localises to the lysosome. It localises to the melanosome. It is found in the secreted. The protein resides in the extracellular space. The catalysed reaction is Specificity similar to, but narrower than, that of pepsin A. Does not cleave the 4-Gln-|-His-5 bond in B chain of insulin.. In terms of biological role, acid protease active in intracellular protein breakdown. Plays a role in APP processing following cleavage and activation by ADAM30 which leads to APP degradation. Involved in the pathogenesis of several diseases such as breast cancer and possibly Alzheimer disease. The polypeptide is Cathepsin D (CTSD) (Homo sapiens (Human)).